The chain runs to 134 residues: Profilin-1 (134 aa).

Cys13 and Cys118 are joined by a disulfide. The Involved in PIP2 interaction signature appears at 84–100 (AVVRGKKGSGGITIKKT). Thr114 is subject to Phosphothreonine.

The protein belongs to the profilin family. As to quaternary structure, occurs in many kinds of cells as a complex with monomeric actin in a 1:1 ratio. In terms of processing, phosphorylated by MAP kinases.

The protein resides in the cytoplasm. Its subcellular location is the cytoskeleton. Binds to actin and affects the structure of the cytoskeleton. At high concentrations, profilin prevents the polymerization of actin, whereas it enhances it at low concentrations. The protein is Profilin-1 of Olea europaea (Common olive).